The following is a 547-amino-acid chain: Elongator complex protein 3 (547 aa).

The Radical SAM core domain occupies 82-372; that stretch reads RTASGIAVVA…YRVQRDIPMP (291 aa). Positions 99, 109, and 112 each coordinate [4Fe-4S] cluster. S161 is modified (phosphoserine). K164 lines the acetyl-CoA pocket. Y202 bears the Phosphotyrosine; by ALK mark. K229 carries the post-translational modification N6-methyllysine. A Phosphotyrosine modification is found at Y251. Residues 396–547 form the N-acetyltransferase domain; the sequence is IQCRDVRTRE…QGPYMVKMLK (152 aa). Residues 474 to 477, 497 to 499, and Y530 each bind acetyl-CoA; these read ELHV and FGM.

Belongs to the ELP3 family. In terms of assembly, component of the elongator complex which consists of ELP1, ELP2, ELP3, ELP4, ELP5 and ELP6. ELP1, ELP2 and ELP3 form the elongator core complex. Interacts with alpha-tubulin. Requires [4Fe-4S] cluster as cofactor. Post-translationally, tyrosine-phosphorylated; phosphorylation on Tyr-202 does not affect elongator complex integrity or ELP3 protein stability. Also serine/threonine-phosphorylated. In terms of tissue distribution, expressed in the cerebellum and spinal motor neurons.

Its subcellular location is the cytoplasm. It is found in the nucleus. It catalyses the reaction uridine(34) in tRNA + acetyl-CoA + S-adenosyl-L-methionine + H2O = 5-(carboxymethyl)uridine(34) in tRNA + 5'-deoxyadenosine + L-methionine + CoA + 2 H(+). It participates in tRNA modification; 5-methoxycarbonylmethyl-2-thiouridine-tRNA biosynthesis. Catalytic tRNA acetyltransferase subunit of the elongator complex which is required for multiple tRNA modifications, including mcm5U (5-methoxycarbonylmethyl uridine), mcm5s2U (5-methoxycarbonylmethyl-2-thiouridine), and ncm5U (5-carbamoylmethyl uridine). In the elongator complex, acts as a tRNA uridine(34) acetyltransferase by mediating formation of carboxymethyluridine in the wobble base at position 34 in tRNAs. May also act as a protein lysine acetyltransferase by mediating acetylation of target proteins; such activity is however unclear in vivo and recent evidences suggest that ELP3 primarily acts as a tRNA acetyltransferase. Involved in neurogenesis: regulates the migration and branching of projection neurons in the developing cerebral cortex, through a process depending on alpha-tubulin acetylation. Required for acetylation of GJA1 in the developing cerebral cortex. The protein is Elongator complex protein 3 of Homo sapiens (Human).